Reading from the N-terminus, the 381-residue chain is MNPFSSESAWLCLTATAVLGGMLLCKAWSSGQLRSQVVCLAGLWGGACLLSLSLLCSLFLLSVSCFFLLYVSSSDQDLLPVDQKAVLVTGADSGFGHALAKHLDKLGFTVFAGVLDKEGPGAEELRKNCSERLSVLQMDVTKPEQIKDVHSEVAEKIQDKGLWAVVNNAGVLHFPIDGELIPMTVYRKCMAVNFFGAVEVTKVFLPLLRKSKGRLVNVSSMGAMIPFQMVAAYASTKAAISMFSAVIRQELAKWGVKVVTIHPGGFQTNIVGSQDSWDKMEKEILDHFSKEIQENYGQEYVHTQKLALPVMREMSNPDITPVLRDIQHAICAKNPSSFYCSGRMTYLWICFAAYSPISLLDYILKNYFTPKLMPRALRTAS.

A helical; Signal-anchor for type II membrane protein membrane pass occupies residues 4–24 (FSSESAWLCLTATAVLGGMLL). An NAD(+)-binding site is contributed by 83-112 (QKAVLVTGADSGFGHALAKHLDKLGFTVFA). Substrate is bound at residue Ser220. Residue Tyr233 is the Proton acceptor of the active site.

Belongs to the short-chain dehydrogenases/reductases (SDR) family. In terms of assembly, homodimer. Highly expressed in the placenta, and in the small intestine, and liver.

Its subcellular location is the endoplasmic reticulum membrane. It carries out the reaction 17beta-estradiol + NAD(+) = estrone + NADH + H(+). It catalyses the reaction testosterone + NAD(+) = androst-4-ene-3,17-dione + NADH + H(+). The enzyme catalyses 17beta-hydroxy-5alpha-androstan-3-one + NAD(+) = 5alpha-androstan-3,17-dione + NADH + H(+). The catalysed reaction is (20S)-hydroxypregn-4-en-3-one + NAD(+) = progesterone + NADH + H(+). In terms of biological role, catalyzes the NAD-dependent oxidation of highly active 17beta-hydroxysteroids, such as estradiol (E2), testosterone (T), and dihydrotestosterone (DHT), to their less active forms and thus regulates the biological potency of these steroids. Oxidizes estradiol to estrone, testosterone to androstenedione, and dihydrotestosterone to 5alpha-androstan-3,17-dione. Also has 20-alpha-HSD activity. The polypeptide is Estradiol 17-beta-dehydrogenase 2 (Hsd17b2) (Rattus norvegicus (Rat)).